The sequence spans 167 residues: MEETYTDSLDPEKLLQCPYDKNHQIRACRFPYHLIKCRKNHPDVASKLATCPFNARHQVPRAEISHHISSCDDRSCIEQDVVNQTRSLRQETLAESTWQCPPCDEDWDKDLWEQTSTPFVWGTTHYSDNNSPASNIVTEHKNNLASGMRVPKSLPYVLPWKNNGNAQ.

Residue serine 8 is modified to Phosphoserine. 2 consecutive CHHC U11-48K-type zinc fingers follow at residues 14 to 41 and 48 to 75; these read LLQC…RKNH and LATC…DDRS. Zn(2+) contacts are provided by cysteine 17, histidine 23, histidine 33, cysteine 37, cysteine 51, histidine 57, histidine 67, and cysteine 71.

The protein belongs to the UPF0224 (FAM112) family.

The protein resides in the cytoplasm. Its function is as follows. Required for spermatogenesis and is involved in the suppression of retrotransposon transcription in male germ cells. This Homo sapiens (Human) protein is Gametocyte-specific factor 1 (GTSF1).